The chain runs to 62 residues: Light-harvesting protein B-870 alpha chain (62 aa).

Residue methionine 1 is modified to N-formylmethionine. At 1–12 (MWRIWQLFDPRQ) the chain is on the cytoplasmic side. Residues 13–33 (ALVGLATFLFVLALLIHFILL) traverse the membrane as a helical segment. Histidine 29 serves as a coordination point for a bacteriochlorophyll. The Periplasmic portion of the chain corresponds to 34-52 (STERFNWLEGASTKPVQTS). The propeptide occupies 53–62 (MVMPSSDLAV).

It belongs to the antenna complex alpha subunit family. As to quaternary structure, the core complex is formed by different alpha and beta chains, binding bacteriochlorophyll molecules, and arranged most probably in tetrameric structures disposed around the reaction center. The non-pigmented gamma chains may constitute additional components.

The protein localises to the cell inner membrane. Its function is as follows. Antenna complexes are light-harvesting systems, which transfer the excitation energy to the reaction centers. The protein is Light-harvesting protein B-870 alpha chain of Rhodospirillum rubrum.